The sequence spans 479 residues: Cardiolipin synthase A (479 aa).

The next 2 helical transmembrane spans lie at 8 to 28 (IFGY…IHAV) and 38 to 58 (IAWA…YLVF). PLD phosphodiesterase domains are found at residues 218 to 245 (VNFR…GDEY) and 392 to 419 (QPGF…DNRS). Active-site residues include His-223, Lys-225, Asp-230, His-397, Lys-399, and Asp-404.

Belongs to the phospholipase D family. Cardiolipin synthase subfamily. ClsA sub-subfamily.

It is found in the cell inner membrane. The enzyme catalyses 2 a 1,2-diacyl-sn-glycero-3-phospho-(1'-sn-glycerol) = a cardiolipin + glycerol. Functionally, catalyzes the reversible phosphatidyl group transfer from one phosphatidylglycerol molecule to another to form cardiolipin (CL) (diphosphatidylglycerol) and glycerol. The sequence is that of Cardiolipin synthase A from Pseudomonas fluorescens (strain ATCC BAA-477 / NRRL B-23932 / Pf-5).